The primary structure comprises 289 residues: Methionyl-tRNA formyltransferase (289 aa).

106–109 is a binding site for (6S)-5,6,7,8-tetrahydrofolate; it reads SLLP.

This sequence belongs to the Fmt family.

It carries out the reaction L-methionyl-tRNA(fMet) + (6R)-10-formyltetrahydrofolate = N-formyl-L-methionyl-tRNA(fMet) + (6S)-5,6,7,8-tetrahydrofolate + H(+). In terms of biological role, attaches a formyl group to the free amino group of methionyl-tRNA(fMet). The formyl group appears to play a dual role in the initiator identity of N-formylmethionyl-tRNA by promoting its recognition by IF2 and preventing the misappropriation of this tRNA by the elongation apparatus. This chain is Methionyl-tRNA formyltransferase, found in Mycoplasmopsis pulmonis (strain UAB CTIP) (Mycoplasma pulmonis).